Here is a 255-residue protein sequence, read N- to C-terminus: MKIRKKKMKLKGKVKKYLMDKLNDNEKLHFSLLDPFKINSSEELKYIAKNLYNVGTDAFLIGGTLGVSKDKLDFVISLLDDYEIPKIIFPSNINLLSEKADALLFLSLLNSDDIYYVIGAQIVAAPIIKMLQMEVIPTAYVIVGHGGTAAHIGKARVIPYDNFELATAYTLAAEYLGMDFVYLEAGSGAPEPIRPEMISFIKKASSIPLIIGGGIRSVEVALKLVEAGANIIVTGNIIERDVDKAIKIIRGIKNK.

Asp-34 and Thr-64 together coordinate Mg(2+). Sn-glycerol 1-phosphate-binding positions include 182–188 (YLEAGSG), 213–214 (GG), and 235–236 (GN).

It belongs to the GGGP/HepGP synthase family. Group II subfamily. Mg(2+) serves as cofactor.

The protein resides in the cytoplasm. The enzyme catalyses sn-glycerol 1-phosphate + (2E,6E,10E)-geranylgeranyl diphosphate = sn-3-O-(geranylgeranyl)glycerol 1-phosphate + diphosphate. Its pathway is membrane lipid metabolism; glycerophospholipid metabolism. Prenyltransferase that catalyzes the transfer of the geranylgeranyl moiety of geranylgeranyl diphosphate (GGPP) to the C3 hydroxyl of sn-glycerol-1-phosphate (G1P). This reaction is the first ether-bond-formation step in the biosynthesis of archaeal membrane lipids. The sequence is that of Geranylgeranylglyceryl phosphate synthase from Saccharolobus islandicus (strain M.16.27) (Sulfolobus islandicus).